A 437-amino-acid chain; its full sequence is 3-phosphoshikimate 1-carboxyvinyltransferase (437 aa).

3-phosphoshikimate is bound by residues lysine 24, serine 25, and arginine 29. Residue lysine 24 participates in phosphoenolpyruvate binding. Phosphoenolpyruvate-binding residues include glycine 95 and arginine 123. 3-phosphoshikimate-binding residues include serine 168, glutamine 170, aspartate 317, and lysine 344. Glutamine 170 is a binding site for phosphoenolpyruvate. The active-site Proton acceptor is the aspartate 317. Residues arginine 348 and arginine 390 each contribute to the phosphoenolpyruvate site.

This sequence belongs to the EPSP synthase family. Monomer.

The protein localises to the cytoplasm. It carries out the reaction 3-phosphoshikimate + phosphoenolpyruvate = 5-O-(1-carboxyvinyl)-3-phosphoshikimate + phosphate. It functions in the pathway metabolic intermediate biosynthesis; chorismate biosynthesis; chorismate from D-erythrose 4-phosphate and phosphoenolpyruvate: step 6/7. In terms of biological role, catalyzes the transfer of the enolpyruvyl moiety of phosphoenolpyruvate (PEP) to the 5-hydroxyl of shikimate-3-phosphate (S3P) to produce enolpyruvyl shikimate-3-phosphate and inorganic phosphate. The polypeptide is 3-phosphoshikimate 1-carboxyvinyltransferase (Wolinella succinogenes (strain ATCC 29543 / DSM 1740 / CCUG 13145 / JCM 31913 / LMG 7466 / NCTC 11488 / FDC 602W) (Vibrio succinogenes)).